A 251-amino-acid chain; its full sequence is 5'-nucleotidase SurE (251 aa).

A divalent metal cation-binding residues include D8, D9, S39, and N95.

The protein belongs to the SurE nucleotidase family. The cofactor is a divalent metal cation.

Its subcellular location is the cytoplasm. It catalyses the reaction a ribonucleoside 5'-phosphate + H2O = a ribonucleoside + phosphate. Functionally, nucleotidase that shows phosphatase activity on nucleoside 5'-monophosphates. The sequence is that of 5'-nucleotidase SurE from Ralstonia pickettii (strain 12J).